Reading from the N-terminus, the 205-residue chain is Transcriptional regulator GfcR (205 aa).

It belongs to the purine/pyrimidine phosphoribosyltransferase family. GfcR subfamily.

The chain is Transcriptional regulator GfcR from Methanococcus vannielii (strain ATCC 35089 / DSM 1224 / JCM 13029 / OCM 148 / SB).